Consider the following 280-residue polypeptide: Para-Rep C2 (280 aa).

The region spanning 1–97 is the CRESS-DNA virus Rep endonuclease domain; sequence MARRYCFTLN…ETLISEIGIP (97 aa). An RCR-1 motif is present at residues 6–9; sequence CFTL. Positions 37 and 45 each coordinate a divalent metal cation. An RCR-2 motif is present at residues 45–47; it reads HLQ. Residues 54–75 carry the Nuclear localization signal motif; sequence NKIRLGGLKKKFGNRAHWEIAR. Tyr84 acts as the For DNA cleavage activity in catalysis. The RCR-3 motif lies at 84 to 87; the sequence is YCCK. The Nuclear localization signal motif lies at 97–103; that stretch reads PVMKGSN. An ATP-binding site is contributed by 172 to 180; the sequence is GSDGGEGKT.

Belongs to the nanoviridea/circoviridae replication-associated protein family. As to quaternary structure, homooligomer (Potential). Rep binds to repeated DNA motifs (iterons). It depends on Mg(2+) as a cofactor. Requires Mn(2+) as cofactor.

The protein resides in the host nucleus. It catalyses the reaction ATP + H2O = ADP + phosphate + H(+). Functionally, initiates and terminates the replication only of its own subviral DNA molecule. The closed circular ssDNA genome is first converted to a superhelical dsDNA. Rep binds a specific hairpin at the genome origin of replication. Introduces an endonucleolytic nick within the intergenic region of the genome, thereby initiating the rolling circle replication (RCR). Following cleavage, binds covalently to the 5'-phosphate of DNA as a tyrosyl ester. The cleavage gives rise to a free 3'-OH that serves as a primer for the cellular DNA polymerase. The polymerase synthesizes the (+) strand DNA by rolling circle mechanism. After one round of replication, a Rep-catalyzed nucleotidyl transfer reaction releases a circular single-stranded virus genome, thereby terminating the replication. Displays origin-specific DNA cleavage, nucleotidyl transferase, ATPase and helicase activities. The polypeptide is Para-Rep C2 (C2) (Subterranean clover stunt C2 alphasatellite (SCSC2A)).